The sequence spans 277 residues: F-actin-capping protein subunit beta isoforms 1 and 2 (277 aa).

At serine 2 the chain carries N-acetylserine.

This sequence belongs to the F-actin-capping protein beta subunit family. Component of the F-actin capping complex, composed of a heterodimer of an alpha and a beta subunit. Component of the WASH complex. In terms of assembly, component of the F-actin capping complex, composed of a heterodimer of an alpha and a beta subunit. Subunit of dynactin, a multiprotein complex part of a tripartite complex with dynein and a adapter, such as BICDL1, BICD2 or HOOK3. The dynactin complex is built around ACTR1A/ACTB filament and consists of an actin-related filament composed of a shoulder domain, a pointed end and a barbed end. Its length is defined by its flexible shoulder domain. In terms of tissue distribution, isoform 1 is detected in pectoral muscle, cardiac muscle and gizzard. Isoform 2 is detected in brain and liver (at protein level). Isoform 2 is the predominant isoform of nonmuscle tissues and isoform 1 is the predominant isoform of muscle tissues.

Its subcellular location is the cytoplasm. It is found in the myofibril. The protein resides in the sarcomere. It localises to the z line. The protein localises to the i band. Its subcellular location is the cytoskeleton. F-actin-capping proteins bind in a Ca(2+)-independent manner to the fast growing ends of actin filaments (barbed end) thereby blocking the exchange of subunits at these ends. Unlike other capping proteins (such as gelsolin and severin), these proteins do not sever actin filaments. May play a role in the regulation of cell morphology and cytoskeletal organization. Its function is as follows. Forms, with CAPZB, the barbed end of the fast growing ends of actin filaments in the dynactin complex and stabilizes dynactin structure. The dynactin multiprotein complex activates the molecular motor dynein for ultra-processive transport along microtubules. In Gallus gallus (Chicken), this protein is F-actin-capping protein subunit beta isoforms 1 and 2 (CAPZB).